Here is a 362-residue protein sequence, read N- to C-terminus: Putative gustatory receptor 89a (362 aa).

The Cytoplasmic segment spans residues methionine 1–tryptophan 38. Residues methionine 39 to tryptophan 59 form a helical membrane-spanning segment. Topologically, residues lysine 60–methionine 74 are extracellular. A helical transmembrane segment spans residues valine 75–leucine 95. Residues glycine 96–threonine 126 lie on the Cytoplasmic side of the membrane. Residues leucine 127–leucine 147 traverse the membrane as a helical segment. At lysine 148–leucine 166 the chain is on the extracellular side. Residues tyrosine 167 to leucine 187 traverse the membrane as a helical segment. Residues glutamate 188 to glutamine 223 are Cytoplasmic-facing. Residues leucine 224–phenylalanine 244 traverse the membrane as a helical segment. At methionine 245–proline 255 the chain is on the extracellular side. The helical transmembrane segment at leucine 256–alanine 276 threads the bilayer. Topologically, residues histidine 277–serine 333 are cytoplasmic. A helical membrane pass occupies residues phenylalanine 334–phenylalanine 354. At glutamate 355 to isoleucine 362 the chain is on the extracellular side.

This sequence belongs to the insect chemoreceptor superfamily. Gustatory receptor (GR) family. Gr77a subfamily.

It localises to the cell membrane. In terms of biological role, probable gustatory receptor which mediates acceptance or avoidance behavior, depending on its substrates. This Drosophila melanogaster (Fruit fly) protein is Putative gustatory receptor 89a (Gr89a).